The following is a 275-amino-acid chain: 3-methyl-2-oxobutanoate hydroxymethyltransferase (275 aa).

Residues Asp44 and Asp83 each coordinate Mg(2+). Residues 44–45 (DS), Asp83, and Lys113 each bind 3-methyl-2-oxobutanoate. Glu115 contributes to the Mg(2+) binding site. Catalysis depends on Glu182, which acts as the Proton acceptor.

The protein belongs to the PanB family. In terms of assembly, homodecamer; pentamer of dimers. Mg(2+) serves as cofactor.

It localises to the cytoplasm. The catalysed reaction is 3-methyl-2-oxobutanoate + (6R)-5,10-methylene-5,6,7,8-tetrahydrofolate + H2O = 2-dehydropantoate + (6S)-5,6,7,8-tetrahydrofolate. It participates in cofactor biosynthesis; (R)-pantothenate biosynthesis; (R)-pantoate from 3-methyl-2-oxobutanoate: step 1/2. Catalyzes the reversible reaction in which hydroxymethyl group from 5,10-methylenetetrahydrofolate is transferred onto alpha-ketoisovalerate to form ketopantoate. This is 3-methyl-2-oxobutanoate hydroxymethyltransferase from Clostridioides difficile (strain 630) (Peptoclostridium difficile).